A 473-amino-acid chain; its full sequence is MAPPAARLALLSAAALTLAARPAPGPRPSPECFTANGADYRGTQSWTALQGGKPCLFWNETFQHPYNTLKYPNGEGGLGEHNYCRNPDGDVSPWCYVAEHEDGVYWKYCEIPACQMPGNLGCYKDHGNPPPLTGTSKTSNKLTIQTCISFCRSQRFKFAGMESGYACFCGNNPDYWKHGEAASTECNNVCFGDHTQPCGGDGRIILFDTLVGACGGNYSSMAAVVYSPDFPDTYATGRVCYWTIRVPGASRIHFNFTIFDIRDSADMVELLDGYTHRVLVRFDGRSRPPLSFNVSLDFVILYFFSDRINQAQGFAVLYQATKEEPPQERPAINQTLAEVITEQANLSVSAAHSSKVLYVITSSPSHPPQTVPGSHSWVPSVGASGHRVEGWTVYGLATLLILTVTAVVAKILLHVTFKSHRVTASGDLRDCRQPGTSGEIWTIFYEPSTTISIFKKKLKGQSQQDDRNPLVSD.

The N-terminal stretch at 1–19 (MAPPAARLALLSAAALTLA) is a signal peptide. The Extracellular portion of the chain corresponds to 21–392 (RPAPGPRPSP…ASGHRVEGWT (372 aa)). A Kringle domain is found at 31 to 114 (ECFTANGADY…YWKYCEIPAC (84 aa)). Intrachain disulfides connect Cys32–Cys114, Cys55–Cys95, Cys84–Cys109, Cys122–Cys186, Cys147–Cys167, Cys151–Cys169, Cys190–Cys198, and Cys214–Cys240. N-linked (GlcNAc...) asparagine glycosylation is present at Asn59. The 95-residue stretch at 116–210 (MPGNLGCYKD…DGRIILFDTL (95 aa)) folds into the WSC domain. The region spanning 214–321 (CGGNYSSMAA…QGFAVLYQAT (108 aa)) is the CUB domain. N-linked (GlcNAc...) asparagine glycosylation is found at Asn217, Asn255, Asn293, Asn333, and Asn345. A helical transmembrane segment spans residues 393–413 (VYGLATLLILTVTAVVAKILL). Over 414-473 (HVTFKSHRVTASGDLRDCRQPGTSGEIWTIFYEPSTTISIFKKKLKGQSQQDDRNPLVSD) the chain is Cytoplasmic. The essential for apoptotic activity stretch occupies residues 414 to 473 (HVTFKSHRVTASGDLRDCRQPGTSGEIWTIFYEPSTTISIFKKKLKGQSQQDDRNPLVSD).

As to quaternary structure, forms a ternary complex with DKK1 and LRP6. Interacts with LRP6 in a DKK1-dependent manner. Interacts with DKK1 and RSPO1 (via FU repeats).

Its subcellular location is the cell membrane. Receptor for Dickkopf proteins. Cooperates with DKK1/2 to inhibit Wnt/beta-catenin signaling by promoting the endocytosis of Wnt receptors LRP5 and LRP6. In the absence of DKK1, potentiates Wnt-beta-catenin signaling by maintaining LRP5 or LRP6 at the cell membrane. Can trigger apoptosis in a Wnt-independent manner and this apoptotic activity is inhibited upon binding of the ligand DKK1. Plays a role in limb development; attenuates Wnt signaling in the developing limb to allow normal limb patterning and can also negatively regulate bone formation. Modulates cell fate decisions in the developing cochlea with an inhibitory role in hair cell fate specification. The chain is Kremen protein 1 (Kremen1) from Rattus norvegicus (Rat).